Here is a 449-residue protein sequence, read N- to C-terminus: uncharacterized protein (449 aa).

The protein resides in the mitochondrion. This is an uncharacterized protein from Podospora anserina (strain S / ATCC MYA-4624 / DSM 980 / FGSC 10383) (Pleurage anserina).